The primary structure comprises 292 residues: D-tagatose-1,6-bisphosphate aldolase subunit KbaY (292 aa).

Asp-82 functions as the Proton donor in the catalytic mechanism. Positions 83 and 180 each coordinate Zn(2+). Gly-181 contributes to the dihydroxyacetone phosphate binding site. His-208 serves as a coordination point for Zn(2+). Residues 209–211 (GAS) and 230–233 (NVAT) contribute to the dihydroxyacetone phosphate site.

This sequence belongs to the class II fructose-bisphosphate aldolase family. TagBP aldolase KbaY subfamily. Homotetramer. Forms a complex with KbaZ. It depends on Zn(2+) as a cofactor.

It carries out the reaction D-tagatofuranose 1,6-bisphosphate = D-glyceraldehyde 3-phosphate + dihydroxyacetone phosphate. It functions in the pathway carbohydrate metabolism; D-tagatose 6-phosphate degradation; D-glyceraldehyde 3-phosphate and glycerone phosphate from D-tagatose 6-phosphate: step 2/2. In terms of biological role, catalytic subunit of the tagatose-1,6-bisphosphate aldolase KbaYZ, which catalyzes the reversible aldol condensation of dihydroxyacetone phosphate (DHAP or glycerone-phosphate) with glyceraldehyde 3-phosphate (G3P) to produce tagatose 1,6-bisphosphate (TBP). Requires KbaZ subunit for full activity and stability. The sequence is that of D-tagatose-1,6-bisphosphate aldolase subunit KbaY from Enterobacter sp. (strain 638).